The primary structure comprises 207 residues: Ribosomal RNA large subunit methyltransferase E (207 aa).

Residues Gly60, Trp62, Asp80, Asp96, and Asp121 each coordinate S-adenosyl-L-methionine. Residue Lys161 is the Proton acceptor of the active site.

The protein belongs to the class I-like SAM-binding methyltransferase superfamily. RNA methyltransferase RlmE family.

The protein localises to the cytoplasm. It catalyses the reaction uridine(2552) in 23S rRNA + S-adenosyl-L-methionine = 2'-O-methyluridine(2552) in 23S rRNA + S-adenosyl-L-homocysteine + H(+). In terms of biological role, specifically methylates the uridine in position 2552 of 23S rRNA at the 2'-O position of the ribose in the fully assembled 50S ribosomal subunit. In Azotobacter vinelandii (strain DJ / ATCC BAA-1303), this protein is Ribosomal RNA large subunit methyltransferase E.